A 380-amino-acid polypeptide reads, in one-letter code: 1-deoxy-D-xylulose 5-phosphate reductoisomerase (380 aa).

Residues T10, G11, S12, I13, G36, R37, N38, and N120 each contribute to the NADPH site. K121 contacts 1-deoxy-D-xylulose 5-phosphate. NADPH is bound at residue E122. D146 serves as a coordination point for Mn(2+). The 1-deoxy-D-xylulose 5-phosphate site is built by S147, E148, S172, and H195. E148 is a Mn(2+) binding site. An NADPH-binding site is contributed by G201. 1-deoxy-D-xylulose 5-phosphate is bound by residues S208, N213, K214, and E217. Residue E217 coordinates Mn(2+).

The protein belongs to the DXR family. It depends on Mg(2+) as a cofactor. Mn(2+) serves as cofactor.

The catalysed reaction is 2-C-methyl-D-erythritol 4-phosphate + NADP(+) = 1-deoxy-D-xylulose 5-phosphate + NADPH + H(+). The protein operates within isoprenoid biosynthesis; isopentenyl diphosphate biosynthesis via DXP pathway; isopentenyl diphosphate from 1-deoxy-D-xylulose 5-phosphate: step 1/6. Its function is as follows. Catalyzes the NADPH-dependent rearrangement and reduction of 1-deoxy-D-xylulose-5-phosphate (DXP) to 2-C-methyl-D-erythritol 4-phosphate (MEP). The protein is 1-deoxy-D-xylulose 5-phosphate reductoisomerase of Listeria monocytogenes serovar 1/2a (strain ATCC BAA-679 / EGD-e).